The following is a 211-amino-acid chain: Ribonuclease HII (211 aa).

The RNase H type-2 domain occupies 17-211; it reads FLSAGVDEVG…CQPSLFEVRS (195 aa). Residues Asp23, Glu24, and Asp119 each contribute to the a divalent metal cation site.

Belongs to the RNase HII family. Mn(2+) serves as cofactor. Requires Mg(2+) as cofactor.

It localises to the cytoplasm. The enzyme catalyses Endonucleolytic cleavage to 5'-phosphomonoester.. Endonuclease that specifically degrades the RNA of RNA-DNA hybrids. This Trichodesmium erythraeum (strain IMS101) protein is Ribonuclease HII.